The sequence spans 99 residues: uncharacterized protein (99 aa).

A disordered region spans residues 50–77 (SAHWEDARSSGGTSPIRARAGSEGRGCQ).

This is an uncharacterized protein from Homo sapiens (Human).